A 348-amino-acid chain; its full sequence is Nitrogenase vanadium-iron protein beta chain (348 aa).

Positions 31, 56, 115, and 153 each coordinate [8Fe-7S] cluster.

Belongs to the NifD/NifK/NifE/NifN family. As to quaternary structure, hexamer of two alpha, two beta, and two delta chains. The cofactor is [8Fe-7S] cluster.

The enzyme catalyses N2 + 8 reduced [2Fe-2S]-[ferredoxin] + 16 ATP + 16 H2O = H2 + 8 oxidized [2Fe-2S]-[ferredoxin] + 2 NH4(+) + 16 ADP + 16 phosphate + 6 H(+). Functionally, this vanadium-iron protein is part of the nitrogenase complex that catalyzes the key enzymatic reactions in nitrogen fixation. The chain is Nitrogenase vanadium-iron protein beta chain (vnfK) from Azorhizophilus paspali (Azotobacter paspali).